The following is a 259-amino-acid chain: Proteasome subunit alpha type-7 (259 aa).

It belongs to the peptidase T1A family. The 26S proteasome consists of a 20S proteasome core and two 19S regulatory subunits. The 20S proteasome core is composed of 28 subunits that are arranged in four stacked rings, resulting in a barrel-shaped structure. The two end rings are each formed by seven alpha subunits, and the two central rings are each formed by seven beta subunits. The catalytic chamber with the active sites is on the inside of the barrel.

It is found in the cytoplasm. It localises to the nucleus. In terms of biological role, the proteasome is a multicatalytic proteinase complex which is characterized by its ability to cleave peptides with Arg, Phe, Tyr, Leu, and Glu adjacent to the leaving group at neutral or slightly basic pH. The proteasome has an ATP-dependent proteolytic activity. The chain is Proteasome subunit alpha type-7 (PAD1) from Solanum lycopersicum (Tomato).